A 536-amino-acid chain; its full sequence is uncharacterized protein (536 aa).

Residues 163 to 394 (LDAYDSMSVQ…MNFIPTRPLE (232 aa)) enclose the Radical SAM core domain. Positions 177, 181, and 184 each coordinate [4Fe-4S] cluster.

It depends on [4Fe-4S] cluster as a cofactor.

This is an uncharacterized protein from Synechocystis sp. (strain ATCC 27184 / PCC 6803 / Kazusa).